A 301-amino-acid polypeptide reads, in one-letter code: 4-hydroxy-tetrahydrodipicolinate synthase (301 aa).

Residue Thr57 coordinates pyruvate. Tyr143 acts as the Proton donor/acceptor in catalysis. Lys171 serves as the catalytic Schiff-base intermediate with substrate. Position 211 (Ile211) interacts with pyruvate.

This sequence belongs to the DapA family. As to quaternary structure, homotetramer; dimer of dimers.

Its subcellular location is the cytoplasm. The catalysed reaction is L-aspartate 4-semialdehyde + pyruvate = (2S,4S)-4-hydroxy-2,3,4,5-tetrahydrodipicolinate + H2O + H(+). It functions in the pathway amino-acid biosynthesis; L-lysine biosynthesis via DAP pathway; (S)-tetrahydrodipicolinate from L-aspartate: step 3/4. In terms of biological role, catalyzes the condensation of (S)-aspartate-beta-semialdehyde [(S)-ASA] and pyruvate to 4-hydroxy-tetrahydrodipicolinate (HTPA). This chain is 4-hydroxy-tetrahydrodipicolinate synthase, found in Bifidobacterium longum (strain DJO10A).